The chain runs to 309 residues: Glutamyl-Q tRNA(Asp) synthetase (309 aa).

Residues 8-12 and E44 each bind L-glutamate; that span reads RFSPS. Positions 11–21 match the 'HIGH' region motif; that stretch reads PSPTGPLHAGS. Residues C100, C102, Y126, and C130 each contribute to the Zn(2+) site. Residues Y205 and R223 each coordinate L-glutamate. The 'KMSKS' region signature appears at 261–265; it reads KLSKQ. K264 lines the ATP pocket.

This sequence belongs to the class-I aminoacyl-tRNA synthetase family. GluQ subfamily. Zn(2+) is required as a cofactor.

In terms of biological role, catalyzes the tRNA-independent activation of glutamate in presence of ATP and the subsequent transfer of glutamate onto a tRNA(Asp). Glutamate is transferred on the 2-amino-5-(4,5-dihydroxy-2-cyclopenten-1-yl) moiety of the queuosine in the wobble position of the QUC anticodon. This Albidiferax ferrireducens (strain ATCC BAA-621 / DSM 15236 / T118) (Rhodoferax ferrireducens) protein is Glutamyl-Q tRNA(Asp) synthetase.